A 147-amino-acid chain; its full sequence is Phospholipase A2 SSD387 (147 aa).

Positions 1 to 19 (MSPKFLLFSIIAVWSCAAA) are cleaved as a signal peptide. Positions 20–28 (IEALFIQPR) are excised as a propeptide. 5 disulfides stabilise this stretch: Cys55–Cys71, Cys70–Cys130, Cys77–Cys123, Cys86–Cys116, and Cys109–Cys121. Gly56 and Gly58 together coordinate Ca(2+). His74 is a catalytic residue. Asp75 contributes to the Ca(2+) binding site. Asp124 is an active-site residue.

Ca(2+) is required as a cofactor. As to expression, expressed by the venom gland.

The protein resides in the secreted. It catalyses the reaction a 1,2-diacyl-sn-glycero-3-phosphocholine + H2O = a 1-acyl-sn-glycero-3-phosphocholine + a fatty acid + H(+). Functionally, PLA2 catalyzes the calcium-dependent hydrolysis of the 2-acyl groups in 3-sn-phosphoglycerides. The chain is Phospholipase A2 SSD387 from Scolopendra dehaani (Thai centipede).